A 484-amino-acid polypeptide reads, in one-letter code: MDLGKDQSHLKHHQTPDPHQEENHSPEVIGTWSLRNRELLRKRKAEVHEKETSQWLFGEQKKRKQQRTGKGNRRGRKRQQNTELKVEPQPQIEKEIVEKALAPIEKKTEPPGSITKVFPSVASPQKVVPEEHFSEICQESNIYQENFSEYQEIAVQNHSSETCQHVSEPEDLSPKMYQEISVLQDNSSKICQDMKEPEDNSPNTCQVISVIQDHPFKMYQDMAKREDLAPKMCQEAAVPKILPCPTSEDTADLAGCSLQAYPKPDVPKGYILDTDQNPAEPEEYNETDQGIAETEGLFPKIQEIAEPKDLSTKTHQESAEPKYLPHKTCNEIIVPKAPSHKTIQETPHSEDYSIEINQETPGSEKYSPETYQEIPGLEEYSPEIYQETSQLEEYSPEIYQETPGPEDLSTETYKNKDVPKECFPEPHQETGGPQGQDPKAHQEDAKDAYTFPQEMKEKPKEEPGIPAILNESHPENDVYSYVLF.

Residues 1–25 (MDLGKDQSHLKHHQTPDPHQEENHS) are compositionally biased toward basic and acidic residues. Disordered stretches follow at residues 1–32 (MDLG…IGTW) and 44–91 (KAEV…PQPQ). Residues 7-87 (QSHLKHHQTP…RQQNTELKVE (81 aa)) are necessary for nuclear localization. The segment covering 61 to 79 (KKRKQQRTGKGNRRGRKRQ) has biased composition (basic residues). Serine 123, serine 159, serine 181, serine 188, and serine 201 each carry phosphoserine. At threonine 246 the chain carries Phosphothreonine. Disordered stretches follow at residues 265–290 (DVPK…TDQG), 306–369 (EPKD…YSPE), and 386–471 (QETS…ILNE). The span at 306-320 (EPKDLSTKTHQESAE) shows a compositional bias: basic and acidic residues. Phosphoserine is present on residues serine 349 and serine 353. Threonine 360 is subject to Phosphothreonine. A phosphoserine mark is found at serine 363 and serine 367. Composition is skewed to basic and acidic residues over residues 413–428 (YKNK…EPHQ), 438–447 (PKAHQEDAKD), and 454–463 (EMKEKPKEEP).

Expressed in hematopoietic precursor cells, thyroid and spermatids (at protein level). Expressed in bone marrow, testis, thymus. Expressed in prostate cancer and ovarian cancer. Also expressed in thymus and thyroid tumors, non-Hodgkin lymphoma, various leukemia cell lines, peripheral blood mononuclear cells (PBMCs) and bone marrow mononuclear cells (BMMCs) of patients with leukemia.

It is found in the nucleus. Its function is as follows. Regulates the proliferation and differentiation of hematopoietic cells. Overexpression block the TPA-induced megakaryocytic differentiation in the K562 cell model. May also prevent cell apoptosis through the activation of the nuclear factor-kappa B (NF-kB). The polypeptide is Hemogen (HEMGN) (Homo sapiens (Human)).